Here is a 906-residue protein sequence, read N- to C-terminus: Probable helicase HelY (906 aa).

The Helicase ATP-binding domain maps to 26–184 (CSALERGHGV…WIQTVRGDTT (159 aa)). 39–46 (APTGAGKT) contacts ATP. Residues 132–135 (DEVH) carry the DEVH box motif. Residues 259-463 (GRPEVIAKLD…SYNMTINLVH (205 aa)) enclose the Helicase C-terminal domain.

This sequence belongs to the helicase family. SKI2 subfamily.

In Mycobacterium tuberculosis (strain CDC 1551 / Oshkosh), this protein is Probable helicase HelY (helY).